The chain runs to 387 residues: Protein arginine N-methyltransferase 1 (387 aa).

The tract at residues 1 to 60 (MDQRKGSGSDANGGLAEATASRLRFEDPDEVMEENPAAAAATVGAEEEGGEGGGGEEVIG) is disordered. A compositionally biased stretch (low complexity) spans 34 to 44 (ENPAAAAATVG). Positions 66-387 (ADYYFDSYSH…VSRTQHYKMR (322 aa)) constitute an SAM-dependent MTase PRMT-type domain. Residues His-79, Arg-88, Gly-112, Glu-134, and Glu-163 each contribute to the S-adenosyl-L-methionine site. Catalysis depends on residues Glu-178 and Glu-187.

It belongs to the class I-like SAM-binding methyltransferase superfamily. Protein arginine N-methyltransferase family.

It localises to the nucleus. The catalysed reaction is L-arginyl-[protein] + S-adenosyl-L-methionine = N(omega)-methyl-L-arginyl-[protein] + S-adenosyl-L-homocysteine + H(+). The enzyme catalyses L-arginyl-[protein] + 2 S-adenosyl-L-methionine = N(omega),N(omega)-dimethyl-L-arginyl-[protein] + 2 S-adenosyl-L-homocysteine + 2 H(+). Its function is as follows. Arginine methyltransferase that methylates (mono and asymmetric dimethylation) the guanidino nitrogens of arginyl residues present in target proteins. This chain is Protein arginine N-methyltransferase 1 (PRMT1), found in Oryza sativa subsp. indica (Rice).